Consider the following 573-residue polypeptide: Splicing factor U2af large subunit A (573 aa).

Residues 1–175 (MSEFEDHEGN…KSKQRVSGFD (175 aa)) form a disordered region. Over residues 22–93 (NGGRDGEIED…ERSRDKDRDH (72 aa)) the composition is skewed to basic and acidic residues. Residues 94 to 105 (RERHHRSSRHRD) are compositionally biased toward basic residues. The segment covering 106–141 (HSRERGERRERGGRDDDDYRRSRDRDHDRRRDDRGG) has biased composition (basic and acidic residues). A compositionally biased stretch (basic residues) spans 159–169 (TRSRSPSKSKQ). RRM domains are found at residues 239–322 (RRVY…RPSD), 359–437 (DRIF…RANQ), and 478–564 (QVVT…YPED).

Belongs to the splicing factor SR family. In terms of assembly, component of the spliceosome. Interacts with SUA. Interacts with SF1 in the nucleus.

It localises to the nucleus. In terms of biological role, necessary for the splicing of pre-mRNA. The sequence is that of Splicing factor U2af large subunit A from Arabidopsis thaliana (Mouse-ear cress).